The chain runs to 811 residues: Endothelin-converting enzyme 2 (811 aa).

At 1–106 (MNVALQELGA…QLLGSRTQLE (106 aa)) the chain is on the cytoplasmic side. The disordered stretch occupies residues 22-64 (LRDEDAPETPVEGGASPDAMEVGKGASPFSPGPSPGMTPGTPR). Residues 107–127 (LVLAGASLLLAALLLGCLVAL) form a helical; Signal-anchor for type II membrane protein membrane-spanning segment. Topologically, residues 128–811 (GVQYHRDPSH…MNPGQLCEVW (684 aa)) are lumenal. Positions 139–811 (TCLTEACIRV…MNPGQLCEVW (673 aa)) constitute a Peptidase M13 domain. Disulfide bonds link Cys140–Cys145, Cys163–Cys796, Cys171–Cys756, Cys227–Cys476, and Cys685–Cys808. N-linked (GlcNAc...) asparagine glycans are attached at residues Asn207, Asn211, Asn252, Asn312, Asn357, Asn424, and Asn580. His648 is a Zn(2+) binding site. Glu649 is a catalytic residue. His652 contacts Zn(2+). N-linked (GlcNAc...) asparagine glycans are attached at residues Asn673 and Asn681. Glu708 lines the Zn(2+) pocket. Residue Asp712 is the Proton donor of the active site.

Belongs to the peptidase M13 family. Requires Zn(2+) as cofactor.

It localises to the golgi apparatus membrane. The protein resides in the cytoplasmic vesicle. Its subcellular location is the secretory vesicle membrane. It carries out the reaction Hydrolysis of the 21-Trp-|-Val-22 bond in big endothelin to form endothelin 1.. Converts big endothelin-1 to endothelin-1. Also involved in the processing of various neuroendocrine peptides, including neurotensin, angiotensin I, substance P, proenkephalin-derived peptides, and prodynorphin-derived peptides. May play a role in amyloid-beta processing. This is Endothelin-converting enzyme 2 from Homo sapiens (Human).